Here is a 140-residue protein sequence, read N- to C-terminus: D-ribose pyranase (140 aa).

The Proton donor role is filled by H20. Residues D28, H99, and 121-123 contribute to the substrate site; that span reads YSS.

The protein belongs to the RbsD / FucU family. RbsD subfamily. As to quaternary structure, homodecamer.

The protein resides in the cytoplasm. The enzyme catalyses beta-D-ribopyranose = beta-D-ribofuranose. It participates in carbohydrate metabolism; D-ribose degradation; D-ribose 5-phosphate from beta-D-ribopyranose: step 1/2. Functionally, catalyzes the interconversion of beta-pyran and beta-furan forms of D-ribose. The polypeptide is D-ribose pyranase (Pseudothermotoga lettingae (strain ATCC BAA-301 / DSM 14385 / NBRC 107922 / TMO) (Thermotoga lettingae)).